The sequence spans 481 residues: Cobyric acid synthase (481 aa).

The region spanning 248–435 is the GATase cobBQ-type domain; sequence ALTVAWLAFS…LHGMFGADGF (188 aa). Cys-330 acts as the Nucleophile in catalysis. The active site involves His-427.

It belongs to the CobB/CobQ family. CobQ subfamily.

The protein operates within cofactor biosynthesis; adenosylcobalamin biosynthesis. Its function is as follows. Catalyzes amidations at positions B, D, E, and G on adenosylcobyrinic A,C-diamide. NH(2) groups are provided by glutamine, and one molecule of ATP is hydrogenolyzed for each amidation. The polypeptide is Cobyric acid synthase (Cereibacter sphaeroides (strain ATCC 17023 / DSM 158 / JCM 6121 / CCUG 31486 / LMG 2827 / NBRC 12203 / NCIMB 8253 / ATH 2.4.1.) (Rhodobacter sphaeroides)).